The sequence spans 130 residues: Large ribosomal subunit protein bL20 (130 aa).

It belongs to the bacterial ribosomal protein bL20 family.

Its function is as follows. Binds directly to 23S ribosomal RNA and is necessary for the in vitro assembly process of the 50S ribosomal subunit. It is not involved in the protein synthesizing functions of that subunit. This Salinispora arenicola (strain CNS-205) protein is Large ribosomal subunit protein bL20.